Consider the following 298-residue polypeptide: Acetyl-coenzyme A carboxylase carboxyl transferase subunit beta (298 aa).

The region spanning 41–298 is the CoA carboxyltransferase N-terminal domain; that stretch reads PTIECPECHA…RIVSKLMNLP (258 aa). Residues cysteine 45, cysteine 48, cysteine 64, and cysteine 67 each contribute to the Zn(2+) site. Residues 45-67 form a C4-type zinc finger; it reads CPECHALVTRTAIAFNAYVCPSC.

The protein belongs to the AccD/PCCB family. Acetyl-CoA carboxylase is a heterohexamer composed of biotin carboxyl carrier protein (AccB), biotin carboxylase (AccC) and two subunits each of ACCase subunit alpha (AccA) and ACCase subunit beta (AccD). Requires Zn(2+) as cofactor.

Its subcellular location is the cytoplasm. It catalyses the reaction N(6)-carboxybiotinyl-L-lysyl-[protein] + acetyl-CoA = N(6)-biotinyl-L-lysyl-[protein] + malonyl-CoA. Its pathway is lipid metabolism; malonyl-CoA biosynthesis; malonyl-CoA from acetyl-CoA: step 1/1. Functionally, component of the acetyl coenzyme A carboxylase (ACC) complex. Biotin carboxylase (BC) catalyzes the carboxylation of biotin on its carrier protein (BCCP) and then the CO(2) group is transferred by the transcarboxylase to acetyl-CoA to form malonyl-CoA. This chain is Acetyl-coenzyme A carboxylase carboxyl transferase subunit beta, found in Acinetobacter baylyi (strain ATCC 33305 / BD413 / ADP1).